The primary structure comprises 37 residues: Large ribosomal subunit protein bL36c (37 aa).

This sequence belongs to the bacterial ribosomal protein bL36 family.

The protein localises to the plastid. It localises to the chloroplast. This Cucumis sativus (Cucumber) protein is Large ribosomal subunit protein bL36c.